The following is a 328-amino-acid chain: Carbonic anhydrase-related protein 10 (328 aa).

The region spanning 31–301 (GWWAYKEVVQ…LNNRCIRTNI (271 aa)) is the Alpha-carbonic anhydrase domain.

It belongs to the alpha-carbonic anhydrase family.

Functionally, does not have a catalytic activity. This Macaca fascicularis (Crab-eating macaque) protein is Carbonic anhydrase-related protein 10 (CA10).